A 354-amino-acid polypeptide reads, in one-letter code: Elongation factor Ts (354 aa).

Residues 81 to 84 (TDFV) are involved in Mg(2+) ion dislocation from EF-Tu.

This sequence belongs to the EF-Ts family.

The protein resides in the cytoplasm. Functionally, associates with the EF-Tu.GDP complex and induces the exchange of GDP to GTP. It remains bound to the aminoacyl-tRNA.EF-Tu.GTP complex up to the GTP hydrolysis stage on the ribosome. The protein is Elongation factor Ts of Campylobacter fetus subsp. fetus (strain 82-40).